The primary structure comprises 565 residues: Sulfite reductase [NADPH] hemoprotein beta-component (565 aa).

Positions 429, 435, 474, and 478 each coordinate [4Fe-4S] cluster. Cysteine 478 is a siroheme binding site.

It belongs to the nitrite and sulfite reductase 4Fe-4S domain family. Alpha(8)-beta(8). The alpha component is a flavoprotein, the beta component is a hemoprotein. It depends on siroheme as a cofactor. [4Fe-4S] cluster is required as a cofactor.

The catalysed reaction is hydrogen sulfide + 3 NADP(+) + 3 H2O = sulfite + 3 NADPH + 4 H(+). It participates in sulfur metabolism; hydrogen sulfide biosynthesis; hydrogen sulfide from sulfite (NADPH route): step 1/1. Functionally, component of the sulfite reductase complex that catalyzes the 6-electron reduction of sulfite to sulfide. This is one of several activities required for the biosynthesis of L-cysteine from sulfate. This chain is Sulfite reductase [NADPH] hemoprotein beta-component, found in Shewanella piezotolerans (strain WP3 / JCM 13877).